Reading from the N-terminus, the 490-residue chain is Secretory immunoglobulin A-binding protein EsiB (490 aa).

Residues methionine 1 to glycine 23 form the signal peptide. Sel1-like repeat units lie at residues alanine 39–tyrosine 74, alanine 77–glycine 109, proline 111–glycine 145, methionine 153–asparagine 182, serine 185–aspartate 218, glutamine 222–asparagine 254, isoleucine 256–asparagine 290, serine 291–aspartate 327, alanine 328–glycine 361, alanine 364–glycine 397, and serine 399–serine 430. Residues histidine 122, glutamate 159, and aspartate 161 each coordinate Mg(2+).

As to quaternary structure, interacts with human secreted IgA (SIgA) at least via resides 244-260. It depends on Mg(2+) as a cofactor.

The protein resides in the cell surface. Upon host (human neutrophil) infection interferes with productive FCAR signaling, inhibiting secreted IgA (SIgA) effector functions and probably avoiding neutrophil activation. Inhibits the SIgA-mediated oxidative burst by neutrophils, decreases generation of ROS (reactive oxygen species) by neutrophils and reduces chemotaxis by neutrophils, all of which are SIgA effector functions used to stimulate the immune response. Does not block SIgA-binding to its receptor (FCAR) on neutrophils, but it decreases SIgA-stimulated phosphorylation of cytoplasmic proteins, including phospholipase C-gamma and MAP kinases, all actions that may be advantageous to the pathogen. In Escherichia coli O6:H1 (strain CFT073 / ATCC 700928 / UPEC), this protein is Secretory immunoglobulin A-binding protein EsiB.